Here is a 143-residue protein sequence, read N- to C-terminus: Mini-ribonuclease 3 (143 aa).

The active site involves Asp35.

This sequence belongs to the MrnC RNase family. Homodimer. Mg(2+) serves as cofactor.

It localises to the cytoplasm. Functionally, involved in correct processing of both the 5' and 3' ends of 23S rRNA precursor. Processes 30S rRNA precursor transcript even in absence of ribonuclease 3 (Rnc); Rnc processes 30S rRNA into smaller rRNA precursors. In Synechocystis sp. (strain ATCC 27184 / PCC 6803 / Kazusa), this protein is Mini-ribonuclease 3.